The chain runs to 275 residues: Large ribosomal subunit protein uL2 (275 aa).

Disordered regions lie at residues 1-24 (MGIR…FSEI) and 208-275 (AGRT…RRRR). Residues 12-22 (GTRQATVSDFS) are compositionally biased toward polar residues. Composition is skewed to basic residues over residues 208–219 (AGRTRHLGRRPQ) and 255–275 (LGKK…RRRR).

This sequence belongs to the universal ribosomal protein uL2 family. In terms of assembly, part of the 50S ribosomal subunit. Forms a bridge to the 30S subunit in the 70S ribosome.

One of the primary rRNA binding proteins. Required for association of the 30S and 50S subunits to form the 70S ribosome, for tRNA binding and peptide bond formation. It has been suggested to have peptidyltransferase activity; this is somewhat controversial. Makes several contacts with the 16S rRNA in the 70S ribosome. In Picosynechococcus sp. (strain ATCC 27264 / PCC 7002 / PR-6) (Agmenellum quadruplicatum), this protein is Large ribosomal subunit protein uL2.